Reading from the N-terminus, the 309-residue chain is GDP-6-deoxy-D-mannose reductase (309 aa).

NADP(+) contacts are provided by residues 11 to 12 (FV), R32, 47 to 48 (DI), and 71 to 73 (AKS). 114–115 (SS) contributes to the substrate binding site. Y140 is an NADP(+) binding site. Residues N169, D183, R209, and 269 to 272 (RPSE) contribute to the substrate site.

This sequence belongs to the NAD(P)-dependent epimerase/dehydratase family. GDP-6-deoxy-D-mannose reductase subfamily.

It carries out the reaction GDP-alpha-D-rhamnose + NAD(+) = GDP-4-dehydro-alpha-D-rhamnose + NADH + H(+). The catalysed reaction is GDP-alpha-D-rhamnose + NADP(+) = GDP-4-dehydro-alpha-D-rhamnose + NADPH + H(+). Functionally, reductase that catalyzes the conversion of GDP-6-deoxy-D-mannose to GDP-4-dehydro-6-deoxy-D-mannose (GDP-D-rhamnose). This Aneurinibacillus thermoaerophilus protein is GDP-6-deoxy-D-mannose reductase (rmd).